The primary structure comprises 317 residues: Polysulfide reductase chain C (317 aa).

A run of 8 helical transmembrane segments spans residues 20–40 (IAVYLFLAGLSAGAIISAIII), 54–75 (IIKAGALIAPLTIGAGLLLLIF), 98–118 (LGVLALFAYFPVVLIFLLGVF), 147–167 (IVTFVLAIGVGAYTGFLLSAM), 182–202 (FLASGISAGISGNLLIGLLFF), 221–237 (VILFEAFLLFILFVGMY), 259–279 (LFWLGVAGMGLALPVVLNVAL), and 289–309 (FVMLNALIVLAGVMALRFYIL).

The protein belongs to the NrfD family. As to quaternary structure, functional polysulfide reductase is made up of three different (A, B, and C) subunits.

Its subcellular location is the cell inner membrane. Its function is as follows. Could possibly serve as the membrane anchor of the enzyme. Component of the phosphorylative electron transport system with polysulfide as the terminal acceptor. The polypeptide is Polysulfide reductase chain C (psrC) (Wolinella succinogenes (strain ATCC 29543 / DSM 1740 / CCUG 13145 / JCM 31913 / LMG 7466 / NCTC 11488 / FDC 602W) (Vibrio succinogenes)).